A 349-amino-acid chain; its full sequence is Shematrin-like protein 1 (349 aa).

Residues 1-16 form the signal peptide; the sequence is MLKLVCAVFLIATVSA.

Prismatic layer of shell (at protein level).

It is found in the secreted. The chain is Shematrin-like protein 1 from Margaritifera margaritifera (Freshwater pearl mussel).